Here is a 1080-residue protein sequence, read N- to C-terminus: Putative bifunctional amine oxidase DDB_G0291301 (1080 aa).

The segment at 1–450 (MREFLKDDYD…TIAKSTVPTN (450 aa)) is putative sarcosine oxidase. 10–40 (DVIVCGGGPVGLATAYRCAKAGKKVLCLEKS) contacts FAD. Residues 445–464 (STVPTNQSSNPDGASSTAPT) form a disordered region. A putative L-amino-acid oxidase region spans residues 450 to 1080 (NQSSNPDGAS…NTAASIGGLK (631 aa)). Residues 508–528 (VGIIGAGMAGLYAAMILQDLG) traverse the membrane as a helical segment. FAD contacts are provided by residues E535, R544, and 563–564 (GA). Position 886 (Y886) interacts with substrate. FAD contacts are provided by residues E978 and 987-990 (VIGS).

The protein in the N-terminal section; belongs to the MSOX/MTOX family. In the C-terminal section; belongs to the flavin monoamine oxidase family. FAD is required as a cofactor.

Its subcellular location is the membrane. The enzyme catalyses sarcosine + O2 + H2O = formaldehyde + glycine + H2O2. The catalysed reaction is L-pipecolate + O2 = L-1-piperideine-6-carboxylate + H2O2 + H(+). It carries out the reaction an L-alpha-amino acid + O2 + H2O = a 2-oxocarboxylate + H2O2 + NH4(+). Catalyzes an oxidative deamination of predominantly hydrophobic and aromatic L-amino acids. Metabolizes sarcosine, L-pipecolic acid and L-proline. The protein is Putative bifunctional amine oxidase DDB_G0291301 of Dictyostelium discoideum (Social amoeba).